The following is a 280-amino-acid chain: Eukaryotic translation initiation factor 3 subunit F-1 (280 aa).

In terms of domain architecture, MPN spans 8 to 138; that stretch reads VRVHPVVLFQ…LRAYVCIQLG (131 aa).

It belongs to the eIF-3 subunit F family. As to quaternary structure, component of the eukaryotic translation initiation factor 3 (eIF-3) complex. The eIF-3 complex interacts with pix.

It is found in the cytoplasm. In terms of biological role, component of the eukaryotic translation initiation factor 3 (eIF-3) complex, which is involved in protein synthesis of a specialized repertoire of mRNAs and, together with other initiation factors, stimulates binding of mRNA and methionyl-tRNAi to the 40S ribosome. The eIF-3 complex specifically targets and initiates translation of a subset of mRNAs involved in cell proliferation. In Drosophila ananassae (Fruit fly), this protein is Eukaryotic translation initiation factor 3 subunit F-1.